A 199-amino-acid chain; its full sequence is Holliday junction branch migration complex subunit RuvA (199 aa).

The domain I stretch occupies residues 1–64 (MIALLTGKLA…EDAINLYGFR (64 aa)). The tract at residues 65–143 (TQQEKELFQL…KLGLAQPQAG (79 aa)) is domain II. Positions 144 to 148 (GATAP) are flexible linker. Positions 149–199 (AKQEIRDDVLSALINLGYKEAVVQKALAELKVTEDATVELVLKQALKILMK) are domain III.

This sequence belongs to the RuvA family. As to quaternary structure, homotetramer. Forms an RuvA(8)-RuvB(12)-Holliday junction (HJ) complex. HJ DNA is sandwiched between 2 RuvA tetramers; dsDNA enters through RuvA and exits via RuvB. An RuvB hexamer assembles on each DNA strand where it exits the tetramer. Each RuvB hexamer is contacted by two RuvA subunits (via domain III) on 2 adjacent RuvB subunits; this complex drives branch migration. In the full resolvosome a probable DNA-RuvA(4)-RuvB(12)-RuvC(2) complex forms which resolves the HJ.

The protein localises to the cytoplasm. Functionally, the RuvA-RuvB-RuvC complex processes Holliday junction (HJ) DNA during genetic recombination and DNA repair, while the RuvA-RuvB complex plays an important role in the rescue of blocked DNA replication forks via replication fork reversal (RFR). RuvA specifically binds to HJ cruciform DNA, conferring on it an open structure. The RuvB hexamer acts as an ATP-dependent pump, pulling dsDNA into and through the RuvAB complex. HJ branch migration allows RuvC to scan DNA until it finds its consensus sequence, where it cleaves and resolves the cruciform DNA. This is Holliday junction branch migration complex subunit RuvA from Geobacter sp. (strain M21).